A 386-amino-acid chain; its full sequence is Succinyl-diaminopimelate desuccinylase (386 aa).

Residue histidine 77 participates in Zn(2+) binding. Aspartate 79 is a catalytic residue. Residue aspartate 110 coordinates Zn(2+). The Proton acceptor role is filled by glutamate 144. Positions 145, 173, and 359 each coordinate Zn(2+).

This sequence belongs to the peptidase M20A family. DapE subfamily. In terms of assembly, homodimer. Zn(2+) is required as a cofactor. Co(2+) serves as cofactor.

The enzyme catalyses N-succinyl-(2S,6S)-2,6-diaminopimelate + H2O = (2S,6S)-2,6-diaminopimelate + succinate. It functions in the pathway amino-acid biosynthesis; L-lysine biosynthesis via DAP pathway; LL-2,6-diaminopimelate from (S)-tetrahydrodipicolinate (succinylase route): step 3/3. Its function is as follows. Catalyzes the hydrolysis of N-succinyl-L,L-diaminopimelic acid (SDAP), forming succinate and LL-2,6-diaminopimelate (DAP), an intermediate involved in the bacterial biosynthesis of lysine and meso-diaminopimelic acid, an essential component of bacterial cell walls. This Ralstonia pickettii (strain 12J) protein is Succinyl-diaminopimelate desuccinylase.